The sequence spans 148 residues: Macrodomain Ter protein (148 aa).

The protein belongs to the MatP family. Homodimer.

Its subcellular location is the cytoplasm. Its function is as follows. Required for spatial organization of the terminus region of the chromosome (Ter macrodomain) during the cell cycle. Prevents early segregation of duplicated Ter macrodomains during cell division. Binds specifically to matS, which is a 13 bp signature motif repeated within the Ter macrodomain. The chain is Macrodomain Ter protein from Haemophilus influenzae (strain ATCC 51907 / DSM 11121 / KW20 / Rd).